The primary structure comprises 503 residues: Cytochrome P450 3A29 (503 aa).

Position 442 (C442) interacts with heme.

This sequence belongs to the cytochrome P450 family. Requires heme as cofactor.

The protein resides in the endoplasmic reticulum membrane. It localises to the microsome membrane. It carries out the reaction an organic molecule + reduced [NADPH--hemoprotein reductase] + O2 = an alcohol + oxidized [NADPH--hemoprotein reductase] + H2O + H(+). Functionally, cytochromes P450 are a group of heme-thiolate monooxygenases. In liver microsomes, this enzyme is involved in an NADPH-dependent electron transport pathway. It oxidizes a variety of structurally unrelated compounds, including steroids, fatty acids, and xenobiotics. The protein is Cytochrome P450 3A29 (CYP3A29) of Sus scrofa (Pig).